Here is a 588-residue protein sequence, read N- to C-terminus: Proteasome-associated ATPase (588 aa).

The segment covering 1–10 (MAAHDDDMNR) has biased composition (basic and acidic residues). The disordered stretch occupies residues 1-23 (MAAHDDDMNRGIRPGRGSDDPSG). A coiled-coil region spans residues 47–94 (RILEERIVELQTNLAGVSAQNERLANTLREARDQIVALKEEVDRLAQP). ATP is bound at residue 276-281 (GCGKTL). The docks into pockets in the proteasome alpha-ring stretch occupies residues 587 to 588 (YL).

It belongs to the AAA ATPase family. In terms of assembly, homohexamer. Assembles into a hexameric ring structure that caps the 20S proteasome core. Strongly interacts with the prokaryotic ubiquitin-like protein Pup through a hydrophobic interface; the interacting region of ARC lies in its N-terminal coiled-coil domain. There is one Pup binding site per ARC hexamer ring. Upon ATP-binding, the C-terminus of ARC interacts with the alpha-rings of the proteasome core, possibly by binding to the intersubunit pockets.

It participates in protein degradation; proteasomal Pup-dependent pathway. In terms of biological role, ATPase which is responsible for recognizing, binding, unfolding and translocation of pupylated proteins into the bacterial 20S proteasome core particle. May be essential for opening the gate of the 20S proteasome via an interaction with its C-terminus, thereby allowing substrate entry and access to the site of proteolysis. Thus, the C-termini of the proteasomal ATPase may function like a 'key in a lock' to induce gate opening and therefore regulate proteolysis. The polypeptide is Proteasome-associated ATPase (Streptomyces scabiei (strain 87.22)).